Here is an 886-residue protein sequence, read N- to C-terminus: Conserved oligomeric Golgi complex subunit 1 (886 aa).

The segment covering 834 to 846 has biased composition (basic and acidic residues); that stretch reads SAERKSPIQEPVE. Positions 834-886 are disordered; sequence SAERKSPIQEPVEKTATTTPTRKSGGNGARKGDSSKSKSSAASFFGMSQEWFR. Ser839 carries the post-translational modification Phosphoserine. Positions 848 to 857 are enriched in polar residues; sequence TATTTPTRKS.

This sequence belongs to the COG1 family. As to quaternary structure, component of the conserved oligomeric Golgi complex which is composed of eight different subunits and is required for normal Golgi morphology and localization.

Its subcellular location is the golgi apparatus membrane. Its function is as follows. Required for normal Golgi function. This Drosophila melanogaster (Fruit fly) protein is Conserved oligomeric Golgi complex subunit 1.